The following is a 322-amino-acid chain: MIFRLGDFRFPDDPARLYPDTPDRPWVLEIGFGDGRFWPHYARTFPEPPNYLGVEISGVSLLKAHRRLKDAGLTNAVLTKLPAEVLVAQVIPHGSLDAIIVNFPDPWPKAGHEDHRLLRVPFFQVAASRLKPGGAALLTTDHDEYFEFACAQAEASGVMRVERVGPPPAALETKYAQKWRDLGLGVNHARFVPTRHDPVPNGTFAPYSEEDPAVPHAVLTLPADFSPQHFDKLTVRGKTWTVVLLDLYATLRRGGWVALAHVVEGDLTQEVLVGITEREDGTHLVRLAKFGGPIITPGVKAAVGAVTEWLEGQGAVVKHRGY.

S-adenosyl-L-methionine is bound by residues Glu29, Glu55, and Asp105. Residue Asp105 is part of the active site. Residues Lys109 and Asp141 each contribute to the substrate site.

This sequence belongs to the class I-like SAM-binding methyltransferase superfamily. TrmB family.

It carries out the reaction guanosine(46) in tRNA + S-adenosyl-L-methionine = N(7)-methylguanosine(46) in tRNA + S-adenosyl-L-homocysteine. It functions in the pathway tRNA modification; N(7)-methylguanine-tRNA biosynthesis. Its function is as follows. Catalyzes the formation of N(7)-methylguanine at position 46 (m7G46) in tRNA. The protein is tRNA (guanine-N(7)-)-methyltransferase of Deinococcus radiodurans (strain ATCC 13939 / DSM 20539 / JCM 16871 / CCUG 27074 / LMG 4051 / NBRC 15346 / NCIMB 9279 / VKM B-1422 / R1).